A 515-amino-acid polypeptide reads, in one-letter code: Maturase K (515 aa).

The protein belongs to the intron maturase 2 family. MatK subfamily.

Its subcellular location is the plastid. It is found in the chloroplast. In terms of biological role, usually encoded in the trnK tRNA gene intron. Probably assists in splicing its own and other chloroplast group II introns. The protein is Maturase K of Cedrus atlantica (Atlas cedar).